Reading from the N-terminus, the 394-residue chain is Putative 8-amino-7-oxononanoate synthase (394 aa).

Arg-30 contributes to the substrate binding site. Residue 117-118 (GY) participates in pyridoxal 5'-phosphate binding. Substrate is bound at residue His-142. Pyridoxal 5'-phosphate is bound by residues Ser-190, 215 to 218 (DEAH), and 246 to 249 (TLSK). Lys-249 bears the N6-(pyridoxal phosphate)lysine mark. Substrate is bound at residue Thr-364.

This sequence belongs to the class-II pyridoxal-phosphate-dependent aminotransferase family. BioF subfamily. Homodimer. Pyridoxal 5'-phosphate serves as cofactor.

It carries out the reaction 6-carboxyhexanoyl-[ACP] + L-alanine + H(+) = (8S)-8-amino-7-oxononanoate + holo-[ACP] + CO2. Its pathway is cofactor biosynthesis; biotin biosynthesis. Functionally, catalyzes the decarboxylative condensation of pimeloyl-[acyl-carrier protein] and L-alanine to produce 8-amino-7-oxononanoate (AON), [acyl-carrier protein], and carbon dioxide. In Nostoc punctiforme (strain ATCC 29133 / PCC 73102), this protein is Putative 8-amino-7-oxononanoate synthase (bioF).